The primary structure comprises 321 residues: ATP-dependent 6-phosphofructokinase (321 aa).

Residue Gly-12 participates in ATP binding. Residues Arg-22–Arg-26 and Arg-55–Asp-60 contribute to the ADP site. ATP-binding positions include Arg-73–Phe-74 and Gly-103–Ser-106. Asp-104 is a binding site for Mg(2+). Substrate is bound at residue Thr-127–Asp-129. Asp-129 (proton acceptor) is an active-site residue. Arg-156 contacts ADP. Residues Arg-164 and Met-171 to Arg-173 each bind substrate. ADP-binding positions include Gly-187–Glu-189, Arg-213, and Lys-215–His-217. Substrate contacts are provided by residues Glu-224, Arg-245, and His-251–Arg-254.

This sequence belongs to the phosphofructokinase type A (PFKA) family. ATP-dependent PFK group I subfamily. Prokaryotic clade 'B1' sub-subfamily. Homotetramer. The cofactor is Mg(2+).

Its subcellular location is the cytoplasm. The enzyme catalyses beta-D-fructose 6-phosphate + ATP = beta-D-fructose 1,6-bisphosphate + ADP + H(+). It functions in the pathway carbohydrate degradation; glycolysis; D-glyceraldehyde 3-phosphate and glycerone phosphate from D-glucose: step 3/4. With respect to regulation, allosterically activated by ADP and other diphosphonucleosides, and allosterically inhibited by phosphoenolpyruvate. Functionally, catalyzes the phosphorylation of D-fructose 6-phosphate to fructose 1,6-bisphosphate by ATP, the first committing step of glycolysis. In Haemophilus influenzae (strain 86-028NP), this protein is ATP-dependent 6-phosphofructokinase.